The primary structure comprises 324 residues: Cyclin-dependent kinase C-3 (324 aa).

Positions 27 to 320 (FRRIRKIGEG…AHDALCAAYF (294 aa)) constitute a Protein kinase domain. ATP-binding positions include 33–41 (IGEGTYGEV) and Lys-56. Phosphothreonine is present on Thr-37. Position 38 is a phosphotyrosine (Tyr-38). Residue Asp-160 is the Proton acceptor of the active site. Position 193 is a phosphothreonine (Thr-193).

This sequence belongs to the protein kinase superfamily. CMGC Ser/Thr protein kinase family. CDC2/CDKX subfamily.

The enzyme catalyses L-seryl-[protein] + ATP = O-phospho-L-seryl-[protein] + ADP + H(+). The catalysed reaction is L-threonyl-[protein] + ATP = O-phospho-L-threonyl-[protein] + ADP + H(+). It catalyses the reaction [DNA-directed RNA polymerase] + ATP = phospho-[DNA-directed RNA polymerase] + ADP + H(+). The sequence is that of Cyclin-dependent kinase C-3 (CDKC-1) from Oryza sativa subsp. japonica (Rice).